The chain runs to 746 residues: Steroid receptor seven-up, isoform A (746 aa).

Residues 38–191 (PPHSAWHEPP…HSQSSNSGSQ (154 aa)) form a disordered region. Residues 56–68 (AASAGPGTTTGSV) are compositionally biased toward low complexity. The span at 83 to 101 (QQSAVIKQDLSCPSLNQAG) shows a compositional bias: polar residues. Positions 122–141 (GSAGGHHSGSGSGSGSGVNP) are enriched in gly residues. Polar residues predominate over residues 158 to 170 (MLTSIKGQPTGCG). The span at 171–191 (STTPSSQANSSHSQSSNSGSQ) shows a compositional bias: low complexity. The segment at residues 197–272 (NIECVVCGDK…MGMRREAVQR (76 aa)) is a DNA-binding region (nuclear receptor). 2 NR C4-type zinc fingers span residues 200 to 220 (CVVCGDKSSGKHYGQFTCEGC) and 236 to 260 (CRGSRNCPIDQHHRNQCQYCRLKKC). An NR LBD domain is found at 307 to 556 (YLSSYISLLL…PLVPSAGSAF (250 aa)). The tract at residues 579 to 645 (QATPPSSGGG…APAPVPTSSV (67 aa)) is disordered. Positions 592–605 (GHNNSSGLGASLPT) are enriched in polar residues. Low complexity predominate over residues 606–645 (QSQSGSSSRNLTASPLSTSLATAPAPASASAPAPVPTSSV).

It belongs to the nuclear hormone receptor family. NR2 subfamily. In terms of tissue distribution, expressed in several embryonic tissues; dorsal vessel, oenocyte and fat body. CNS expression is dynamic and confined to temporally restricted subsections of the NB lineage; expressed in many NB and GMCs, but only a small number of neurons.

It localises to the nucleus. Functionally, receptor that is required in photoreceptors R1, R3, R4 and R6 during eye development; generation of the ganglion mother cell-2 (GMC-2) fate in the nb7-3 lineage, coinciding with the transition in the expression of HB to KR in the neuroblasts (NBs). The chain is Steroid receptor seven-up, isoform A (svp) from Drosophila melanogaster (Fruit fly).